We begin with the raw amino-acid sequence, 205 residues long: Small ribosomal subunit protein uS4 (205 aa).

Positions 95–156 (SRLDNIVYRM…KTIKIPIVKA (62 aa)) constitute an S4 RNA-binding domain.

This sequence belongs to the universal ribosomal protein uS4 family. In terms of assembly, part of the 30S ribosomal subunit. Contacts protein S5. The interaction surface between S4 and S5 is involved in control of translational fidelity.

Functionally, one of the primary rRNA binding proteins, it binds directly to 16S rRNA where it nucleates assembly of the body of the 30S subunit. With S5 and S12 plays an important role in translational accuracy. In Mycoplasma pneumoniae (strain ATCC 29342 / M129 / Subtype 1) (Mycoplasmoides pneumoniae), this protein is Small ribosomal subunit protein uS4.